The chain runs to 622 residues: Probable potassium transport system protein Kup (622 aa).

12 consecutive transmembrane segments (helical) span residues 8-28, 50-70, 103-123, 137-157, 168-188, 203-223, 247-267, 285-305, 337-357, 366-386, 393-413, and 419-439; these read LAALTLGAIGVVYGDIGTSVL, ILSIFFWTLTVIVSLKYVVLV, LAVGIFGTSLFYGDGVITPAI, PHFKKYVIPITLVVLFCLFAV, FFGPITLVWFASIALLGLAHI, ALGFMFANPGTSFIILGAVVL, WFGVAMPALTLNYFGQGALLL, ALIPLVVLATMATVIASQALI, IYMPLVNWGLFVAIVLAVVMF, AYGIAVTLDMLITTTLTFFVI, PLALCVAATGCFAVVDLAFFA, and LFQGGWFPLMIGGIVFALMMT.

It belongs to the HAK/KUP transporter (TC 2.A.72) family.

Its subcellular location is the cell inner membrane. It catalyses the reaction K(+)(in) + H(+)(in) = K(+)(out) + H(+)(out). Its function is as follows. Transport of potassium into the cell. Likely operates as a K(+):H(+) symporter. This chain is Probable potassium transport system protein Kup, found in Verminephrobacter eiseniae (strain EF01-2).